We begin with the raw amino-acid sequence, 146 residues long: LFNEERFRSIPIHYRLNRIPSYGFIFYQHRSAASTNNQFIPYPFYARPVAVRPHAQKPQWQDQPNVYPPTGARRPRPHASFIAIPPKKNQDTTAIPAINSIATVEPTLIPTTEPVVNTVVIPEAASEFLITNTPETTAVQVSSTVV.

O-linked (GalNAc...) threonine glycosylation is found at T107, T112, and T118. Position 143 is a phosphoserine (S143).

The protein belongs to the kappa-casein family. As to expression, mammary gland specific. Secreted in milk.

The protein localises to the secreted. Kappa-casein stabilizes micelle formation, preventing casein precipitation in milk. The sequence is that of Kappa-casein (CSN3) from Dicotyles tajacu (Collared peccary).